The chain runs to 492 residues: Ribose import ATP-binding protein RbsA (492 aa).

ABC transporter domains lie at isoleucine 3–lysine 239 and arginine 238–lysine 492. Glycine 35–serine 42 provides a ligand contact to ATP.

It belongs to the ABC transporter superfamily. Ribose importer (TC 3.A.1.2.1) family. In terms of assembly, the complex is composed of an ATP-binding protein (RbsA), two transmembrane proteins (RbsC) and a solute-binding protein (RbsB).

It localises to the cell membrane. The catalysed reaction is D-ribose(out) + ATP + H2O = D-ribose(in) + ADP + phosphate + H(+). Its function is as follows. Part of the ABC transporter complex RbsABC involved in ribose import. Responsible for energy coupling to the transport system. This chain is Ribose import ATP-binding protein RbsA, found in Streptococcus agalactiae serotype V (strain ATCC BAA-611 / 2603 V/R).